Reading from the N-terminus, the 307-residue chain is Ribosomal RNA large subunit methyltransferase F (307 aa).

This sequence belongs to the methyltransferase superfamily. METTL16/RlmF family.

The protein localises to the cytoplasm. It carries out the reaction adenosine(1618) in 23S rRNA + S-adenosyl-L-methionine = N(6)-methyladenosine(1618) in 23S rRNA + S-adenosyl-L-homocysteine + H(+). Functionally, specifically methylates the adenine in position 1618 of 23S rRNA. The sequence is that of Ribosomal RNA large subunit methyltransferase F from Bacteroides thetaiotaomicron (strain ATCC 29148 / DSM 2079 / JCM 5827 / CCUG 10774 / NCTC 10582 / VPI-5482 / E50).